The sequence spans 172 residues: Probable metallophosphoesterase MTH_1774 (172 aa).

A divalent metal cation is bound by residues Asp-8, His-10, Asp-37, Asn-59, His-85, His-113, and His-115.

The protein belongs to the metallophosphoesterase superfamily. YfcE family. A divalent metal cation serves as cofactor.

The protein is Probable metallophosphoesterase MTH_1774 of Methanothermobacter thermautotrophicus (strain ATCC 29096 / DSM 1053 / JCM 10044 / NBRC 100330 / Delta H) (Methanobacterium thermoautotrophicum).